The sequence spans 367 residues: 7,8-didemethyl-8-hydroxy-5-deazariboflavin synthase (367 aa).

The 237-residue stretch at Leu39 to Asn275 folds into the Radical SAM core domain. [4Fe-4S] cluster is bound by residues Cys53, Cys57, and Cys60.

Belongs to the radical SAM superfamily. CofG family. In terms of assembly, consists of two subunits, CofG and CofH. It depends on [4Fe-4S] cluster as a cofactor.

It carries out the reaction 5-amino-5-(4-hydroxybenzyl)-6-(D-ribitylimino)-5,6-dihydrouracil + S-adenosyl-L-methionine = 7,8-didemethyl-8-hydroxy-5-deazariboflavin + 5'-deoxyadenosine + L-methionine + NH4(+) + H(+). The protein operates within cofactor biosynthesis; coenzyme F0 biosynthesis. Catalyzes the radical-mediated synthesis of 7,8-didemethyl-8-hydroxy-5-deazariboflavin from 5-amino-5-(4-hydroxybenzyl)-6-(D-ribitylimino)-5,6-dihydrouracil. The protein is 7,8-didemethyl-8-hydroxy-5-deazariboflavin synthase of Halobacterium salinarum (strain ATCC 29341 / DSM 671 / R1).